Here is a 201-residue protein sequence, read N- to C-terminus: 3-isopropylmalate dehydratase small subunit (201 aa).

Belongs to the LeuD family. LeuD type 1 subfamily. Heterodimer of LeuC and LeuD.

The catalysed reaction is (2R,3S)-3-isopropylmalate = (2S)-2-isopropylmalate. Its pathway is amino-acid biosynthesis; L-leucine biosynthesis; L-leucine from 3-methyl-2-oxobutanoate: step 2/4. Its function is as follows. Catalyzes the isomerization between 2-isopropylmalate and 3-isopropylmalate, via the formation of 2-isopropylmaleate. This chain is 3-isopropylmalate dehydratase small subunit, found in Salmonella schwarzengrund (strain CVM19633).